We begin with the raw amino-acid sequence, 450 residues long: 3-phosphoshikimate 1-carboxyvinyltransferase (450 aa).

Residues lysine 28, serine 29, and arginine 33 each contribute to the 3-phosphoshikimate site. Residue lysine 28 coordinates phosphoenolpyruvate. The phosphoenolpyruvate site is built by glycine 100 and arginine 128. Residues serine 173, glutamine 175, aspartate 326, and lysine 353 each coordinate 3-phosphoshikimate. Phosphoenolpyruvate is bound at residue glutamine 175. The active-site Proton acceptor is aspartate 326. Arginine 357 and arginine 402 together coordinate phosphoenolpyruvate.

The protein belongs to the EPSP synthase family. Monomer.

Its subcellular location is the cytoplasm. It carries out the reaction 3-phosphoshikimate + phosphoenolpyruvate = 5-O-(1-carboxyvinyl)-3-phosphoshikimate + phosphate. The protein operates within metabolic intermediate biosynthesis; chorismate biosynthesis; chorismate from D-erythrose 4-phosphate and phosphoenolpyruvate: step 6/7. In terms of biological role, catalyzes the transfer of the enolpyruvyl moiety of phosphoenolpyruvate (PEP) to the 5-hydroxyl of shikimate-3-phosphate (S3P) to produce enolpyruvyl shikimate-3-phosphate and inorganic phosphate. This chain is 3-phosphoshikimate 1-carboxyvinyltransferase, found in Brucella abortus (strain S19).